Here is a 306-residue protein sequence, read N- to C-terminus: D-alanine--D-alanine ligase (306 aa).

The ATP-grasp domain maps to 104–303 (KMLWKAFGLP…FEQLVVKILE (200 aa)). 134 to 189 (VAKLGLPLMVKPSLEGSSVGLTKVKAVEELKSAVEYALKFDNTILIEEWLAGDELT) is an ATP binding site. The Mg(2+) site is built by aspartate 257, glutamate 270, and asparagine 272.

It belongs to the D-alanine--D-alanine ligase family. Mg(2+) serves as cofactor. Requires Mn(2+) as cofactor.

The protein resides in the cytoplasm. It carries out the reaction 2 D-alanine + ATP = D-alanyl-D-alanine + ADP + phosphate + H(+). It functions in the pathway cell wall biogenesis; peptidoglycan biosynthesis. Functionally, cell wall formation. This Haemophilus influenzae (strain 86-028NP) protein is D-alanine--D-alanine ligase.